The chain runs to 106 residues: Insulin-like peptide 03 (106 aa).

Positions 1–18 are cleaved as a signal peptide; it reads MLFYFGLAVIFLIDSSQT. Residues 19–34 constitute a propeptide that is removed on maturation; the sequence is QTLYKVNEVGGSQVDR. Disulfide bonds link C37–C93, C49–C106, and C92–C97. Residues 52 to 82 constitute a propeptide, c peptide; sequence KKRQNIPRKYGRDPNNILEKEEFAKRFLRVR.

Belongs to the insulin family.

It is found in the secreted. Insulin decreases blood glucose concentration. May have evolved to activate insulin receptors (INSR) in vertebrates. Molecular docking studies reveals unique interaction with the human insulin receptor. In vivo, insulin-like peptide injection reduces blood glucose levels in two models of zebrafish diabetes (streptozotocin- and glucose-induced). Also shorter swimming distance of zebrafish larvae, an effect which is not observed with human insulin. The protein is Insulin-like peptide 03 of Exaiptasia diaphana (Tropical sea anemone).